Consider the following 747-residue polypeptide: Superkiller protein 7 (747 aa).

The interval 14-51 is disordered; sequence KSKGLLSADQSHSTSKSASLLERLHKNRETKDNNAETK. Positions 21–31 are enriched in polar residues; it reads ADQSHSTSKSA. Residues 35 to 51 are compositionally biased toward basic and acidic residues; it reads ERLHKNRETKDNNAETK. Phosphoserine is present on residues Ser-88 and Ser-90. Positions 89–117 are disordered; that stretch reads NSDLEKQGKSVTLDSKENELPTKRKSPDD. The tr-type G domain maps to 265-503; the sequence is PLNLTCLFLG…YVPEWYEGPT (239 aa). Residues 274 to 281 form a G1 region; sequence GDTNAGKS. 274–281 serves as a coordination point for GTP; the sequence is GDTNAGKS. Positions 331 to 335 are G2; sequence GFSMF. The interval 356–359 is G3; the sequence is DTPG. GTP contacts are provided by residues 356-360 and 427-430; these read DTPGS and NKAD. The interval 427–430 is G4; that stretch reads NKAD. Positions 467 to 469 are G5; it reads SGL.

Belongs to the TRAFAC class translation factor GTPase superfamily. Classic translation factor GTPase family. As to quaternary structure, interacts with the exosome and with the SKI complex composed of at least SKI2, SKI3 and SKI8. Interacts directly with SKI3 and SKI8.

It is found in the cytoplasm. Represses the expression of non-poly(A) mRNAs like L-A or M viruses and is therefore involved in antiviral system. Mediates interactions via its N-terminus between the exosome and the SKI complex which operate in the 3'-to-5' mRNA-decay pathway. By interacting with NAM7, is also required for nonsense-mediated 3'-to-5' mRNA-decay (NMD). May recognize a stalled 80S ribosome at the 3'-end of a nonstop mRNA which leads to the recruitment of the exosome and SKI complexes to the mRNAs to be degraded. This chain is Superkiller protein 7 (SKI7), found in Saccharomyces cerevisiae (strain ATCC 204508 / S288c) (Baker's yeast).